The following is a 786-amino-acid chain: Endonuclease MutS2 (786 aa).

Residue 333–340 (GPNTGGKT) coordinates ATP. The Smr domain maps to 711 to 786 (LDLRGERYDQ…GSGATIVNFK (76 aa)).

This sequence belongs to the DNA mismatch repair MutS family. MutS2 subfamily. In terms of assembly, homodimer. Binds to stalled ribosomes, contacting rRNA.

Endonuclease that is involved in the suppression of homologous recombination and thus may have a key role in the control of bacterial genetic diversity. Its function is as follows. Acts as a ribosome collision sensor, splitting the ribosome into its 2 subunits. Detects stalled/collided 70S ribosomes which it binds and splits by an ATP-hydrolysis driven conformational change. Acts upstream of the ribosome quality control system (RQC), a ribosome-associated complex that mediates the extraction of incompletely synthesized nascent chains from stalled ribosomes and their subsequent degradation. Probably generates substrates for RQC. The protein is Endonuclease MutS2 of Lacticaseibacillus paracasei (strain ATCC 334 / BCRC 17002 / CCUG 31169 / CIP 107868 / KCTC 3260 / NRRL B-441) (Lactobacillus paracasei).